Consider the following 220-residue polypeptide: uncharacterized protein (220 aa).

4 helical membrane passes run leucine 61–glycine 81, serine 85–phenylalanine 105, phenylalanine 115–leucine 135, and leucine 150–leucine 170.

It localises to the membrane. This is an uncharacterized protein from Caenorhabditis elegans.